A 400-amino-acid polypeptide reads, in one-letter code: PHD finger protein 24 (400 aa).

A lipid anchor (N-myristoyl glycine) is attached at G2. The segment at 30 to 108 is disordered; it reads DRPSIRRTGE…FTPPAFIRPT (79 aa). Residue R36 is modified to Omega-N-methylarginine. Position 43 is a phosphoserine (S43). At T47 the chain carries Phosphothreonine. S51 carries the phosphoserine modification. Over residues 78–97 the composition is skewed to basic and acidic residues; that stretch reads AWERLRDGRGVEPEEFDRTG. The PHD-type zinc finger occupies 129 to 190; that stretch reads NDEMCDVCEV…TGWSCHYCDN (62 aa).

In Pongo abelii (Sumatran orangutan), this protein is PHD finger protein 24.